The primary structure comprises 95 residues: Large ribosomal subunit protein uL23 (95 aa).

The protein belongs to the universal ribosomal protein uL23 family. As to quaternary structure, part of the 50S ribosomal subunit. Contacts protein L29, and trigger factor when it is bound to the ribosome.

Functionally, one of the early assembly proteins it binds 23S rRNA. One of the proteins that surrounds the polypeptide exit tunnel on the outside of the ribosome. Forms the main docking site for trigger factor binding to the ribosome. This Leuconostoc mesenteroides subsp. mesenteroides (strain ATCC 8293 / DSM 20343 / BCRC 11652 / CCM 1803 / JCM 6124 / NCDO 523 / NBRC 100496 / NCIMB 8023 / NCTC 12954 / NRRL B-1118 / 37Y) protein is Large ribosomal subunit protein uL23.